The chain runs to 272 residues: MSQPILVFDSGIGGLSVLAEIRKLLPHHDYCYLFDNARLPYGELEEQELVSGCVALIDQVVERTHAAIVVVACNTASTVVLPALRATLSIPVVGVVPAIKPAAQLSKSKRIGLLATPGTVKRHYTYELISQFADDCHVELFGSSELVLMAEQKIATGQLDMARLTQVLSPIVTADLDVLVLGCTHFPMLRDELQQVLGKGVTLLDSGEAIAKRVKTLLAETKSEQQVQEDANRDSVMQAFYTKAKISEGLVSMLVDCGFSTLERITTINSNR.

Substrate-binding positions include 9–10 (DS) and 41–42 (YG). The active-site Proton donor/acceptor is C73. 74-75 (NT) is a binding site for substrate. C183 acts as the Proton donor/acceptor in catalysis. Substrate is bound at residue 184–185 (TH).

Belongs to the aspartate/glutamate racemases family.

The catalysed reaction is L-glutamate = D-glutamate. The protein operates within cell wall biogenesis; peptidoglycan biosynthesis. Its function is as follows. Provides the (R)-glutamate required for cell wall biosynthesis. The protein is Glutamate racemase of Shewanella sp. (strain MR-4).